Reading from the N-terminus, the 147-residue chain is Large ribosomal subunit protein bL9 (147 aa).

Belongs to the bacterial ribosomal protein bL9 family.

Its function is as follows. Binds to the 23S rRNA. This Natranaerobius thermophilus (strain ATCC BAA-1301 / DSM 18059 / JW/NM-WN-LF) protein is Large ribosomal subunit protein bL9.